We begin with the raw amino-acid sequence, 378 residues long: UPF0725 protein At1g23970 (378 aa).

The protein belongs to the UPF0725 (EMB2204) family.

The chain is UPF0725 protein At1g23970 from Arabidopsis thaliana (Mouse-ear cress).